The following is a 301-amino-acid chain: RNA polymerase II holoenzyme cyclin-like subunit (301 aa).

A Cyclin N-terminal domain is found at 53 to 142 (QQLIKLGKRT…LGECEFALIS (90 aa)).

It belongs to the cyclin family. Cyclin C subfamily. Component of the srb8-11 complex, a regulatory module of the Mediator complex.

It localises to the nucleus. Its function is as follows. Component of the srb8-11 complex. The srb8-11 complex is a regulatory module of the Mediator complex which is itself involved in regulation of basal and activated RNA polymerase II-dependent transcription. The srb8-11 complex may be involved in the transcriptional repression of a subset of genes regulated by Mediator. It may inhibit the association of the Mediator complex with RNA polymerase II to form the holoenzyme complex. The srb8-11 complex phosphorylates the C-terminal domain (CTD) of the largest subunit of RNA polymerase II. This chain is RNA polymerase II holoenzyme cyclin-like subunit (ssn8), found in Aspergillus terreus (strain NIH 2624 / FGSC A1156).